The sequence spans 432 residues: Pachytene checkpoint protein 2 homolog (432 aa).

179–186 (GPPGTGKT) provides a ligand contact to ATP.

Belongs to the AAA ATPase family. PCH2 subfamily.

In terms of biological role, plays a key role in chromosome recombination and chromosome structure development during meiosis. Required at early steps in meiotic recombination that leads to non-crossovers pathways. Also needed for efficient completion of homologous synapsis by influencing crossover distribution along the chromosomes affecting both crossovers and non-crossovers pathways. The protein is Pachytene checkpoint protein 2 homolog (trip13) of Xenopus tropicalis (Western clawed frog).